The sequence spans 75 residues: Small ribosomal subunit protein bS18c (75 aa).

The span at M1–L12 shows a compositional bias: basic residues. Positions M1–I21 are disordered.

This sequence belongs to the bacterial ribosomal protein bS18 family. Part of the 30S ribosomal subunit.

It localises to the plastid. The protein resides in the chloroplast. The protein is Small ribosomal subunit protein bS18c of Cycas taitungensis (Prince sago).